The chain runs to 1899 residues: Protein TIC 214 (1899 aa).

Helical transmembrane passes span 23–43, 64–84, 87–107, 124–144, 172–192, and 217–237; these read VVVGLYYGFLTTFSIGPSYLF, FITGQLMMFISIYYVPLHLAL, PHTITVLVLPYLLFHFFWNNH, LSIQCLFLNNLIVQFLNLFIL, VGWLIGHILFMKLVGLVLVCI, and WTARIFSTLLFITCMYYLGVH. 2 disordered regions span residues 256–280 and 1581–1619; these read EQKKSKEETDEEIEKTFETKETKKE and PKDYLELDNGTPKEKEKQGKVKGNLGSNQKTRENLGLDL. The segment covering 269 to 280 has biased composition (basic and acidic residues); sequence EKTFETKETKKE.

This sequence belongs to the TIC214 family. As to quaternary structure, part of the Tic complex.

The protein localises to the plastid. Its subcellular location is the chloroplast inner membrane. In terms of biological role, involved in protein precursor import into chloroplasts. May be part of an intermediate translocation complex acting as a protein-conducting channel at the inner envelope. The chain is Protein TIC 214 from Ceratophyllum demersum (Rigid hornwort).